A 396-amino-acid polypeptide reads, in one-letter code: MSGSSLRRVAVFGATGSIGASALDVIARHPERLRASVLSAGSKVDALLALCVQHRPAHAVIADAALYPTLRDGLHDAGLTTQAHAGDQALDALAASDACDTVVAAIVGAAGLSSTLAAAAAGKRLLLANKESLVLAGELLTRTAAAAGAEIIPIDSEHSAIFQCLRSCDASRGVRRVILTASGGPFRGRQRAQLAEVTPAQAVAHPKWSMGPKISVDSATLMNKGLEVIEAHHLFGLPGEQIDVLVHPQSLVHSLVEFVDGSTLAQLGLPDMRTTLAVGLAWPERVESGVGGLDLLQQGRLDFEAPDTGAFPCLRLAWDALRAGGTAPAILNAANEVAVSAFLQGKVGFLAIPALVEHTLTTLQRQNADTLNTLLFADAEARRTTERALAHHSLHA.

Positions 15, 16, 17, 18, 41, and 129 each coordinate NADPH. Residue K130 coordinates 1-deoxy-D-xylulose 5-phosphate. E131 lines the NADPH pocket. D155 contributes to the Mn(2+) binding site. The 1-deoxy-D-xylulose 5-phosphate site is built by S156, E157, S182, and H205. Mn(2+) is bound at residue E157. G211 contacts NADPH. 1-deoxy-D-xylulose 5-phosphate is bound by residues S218, N223, K224, and E227. Residue E227 coordinates Mn(2+).

This sequence belongs to the DXR family. Requires Mg(2+) as cofactor. The cofactor is Mn(2+).

The enzyme catalyses 2-C-methyl-D-erythritol 4-phosphate + NADP(+) = 1-deoxy-D-xylulose 5-phosphate + NADPH + H(+). The protein operates within isoprenoid biosynthesis; isopentenyl diphosphate biosynthesis via DXP pathway; isopentenyl diphosphate from 1-deoxy-D-xylulose 5-phosphate: step 1/6. Its function is as follows. Catalyzes the NADPH-dependent rearrangement and reduction of 1-deoxy-D-xylulose-5-phosphate (DXP) to 2-C-methyl-D-erythritol 4-phosphate (MEP). This Xanthomonas campestris pv. campestris (strain B100) protein is 1-deoxy-D-xylulose 5-phosphate reductoisomerase.